Here is a 467-residue protein sequence, read N- to C-terminus: A-type ATP synthase subunit B (467 aa).

The disordered stretch occupies residues 95–114 (GKGQPRDHMPLPPPEDFRDV).

This sequence belongs to the ATPase alpha/beta chains family. Has multiple subunits with at least A(3), B(3), C, D, E, F, H, I and proteolipid K(x).

The protein localises to the cell membrane. Component of the A-type ATP synthase that produces ATP from ADP in the presence of a proton gradient across the membrane. The B chain is a regulatory subunit. The sequence is that of A-type ATP synthase subunit B from Pyrobaculum aerophilum (strain ATCC 51768 / DSM 7523 / JCM 9630 / CIP 104966 / NBRC 100827 / IM2).